The sequence spans 333 residues: Chitinase-like protein 2 (333 aa).

Positions 1–27 (MVSKPLFSLLLLTVALVVFQTGTLVNA) are cleaved as a signal peptide. The cysteines at positions 50 and 56 are disulfide-linked. A glycan (N-linked (GlcNAc...) asparagine) is linked at Asn65. Cys165 and Cys175 form a disulfide bridge. Residues Asn216 and Asn252 are each glycosylated (N-linked (GlcNAc...) asparagine). The cysteines at positions 275 and 313 are disulfide-linked. The interval 307–333 (PHEKLSCADQEPFSSSSSAPPSSGSSS) is disordered. Over residues 320-333 (SSSSSAPPSSGSSS) the composition is skewed to low complexity.

The protein belongs to the glycosyl hydrolase 19 family. As to expression, mostly expressed in stems, especially in xylem and interfascicular fibers.

It localises to the secreted. Functionally, no chitinase activity. Required for proper cell wall biosynthesis in etiolated seedlings. Prevents lignin accumulation in hypocotyls. This chain is Chitinase-like protein 2 (CTL2), found in Arabidopsis thaliana (Mouse-ear cress).